Here is a 276-residue protein sequence, read N- to C-terminus: uncharacterized protein (276 aa).

A signal peptide spans 1 to 29 (MKSHVRSFKTYIRDEIIKKGGWVNAHAHA).

The protein belongs to the metallo-dependent hydrolases superfamily.

This is an uncharacterized protein from Haemophilus influenzae (strain ATCC 51907 / DSM 11121 / KW20 / Rd).